Consider the following 265-residue polypeptide: Orotidine 5'-phosphate decarboxylase (265 aa).

Residues aspartate 38, 60–62 (KTH), 92–101 (DRKFADIGKT), tyrosine 218, and arginine 236 contribute to the substrate site. Catalysis depends on lysine 94, which acts as the Proton donor.

Belongs to the OMP decarboxylase family.

The enzyme catalyses orotidine 5'-phosphate + H(+) = UMP + CO2. It functions in the pathway pyrimidine metabolism; UMP biosynthesis via de novo pathway; UMP from orotate: step 2/2. In Cyberlindnera fabianii (Yeast), this protein is Orotidine 5'-phosphate decarboxylase (URA3).